A 230-amino-acid polypeptide reads, in one-letter code: Orotidine 5'-phosphate decarboxylase (230 aa).

Residues Asp10, Lys31, 58-67 (DLKLHDIPNT), Thr117, Arg179, Gln188, Gly208, and Arg209 each bind substrate. Lys60 functions as the Proton donor in the catalytic mechanism.

This sequence belongs to the OMP decarboxylase family. Type 1 subfamily. As to quaternary structure, homodimer.

The enzyme catalyses orotidine 5'-phosphate + H(+) = UMP + CO2. It functions in the pathway pyrimidine metabolism; UMP biosynthesis via de novo pathway; UMP from orotate: step 2/2. Functionally, catalyzes the decarboxylation of orotidine 5'-monophosphate (OMP) to uridine 5'-monophosphate (UMP). This chain is Orotidine 5'-phosphate decarboxylase, found in Staphylococcus haemolyticus (strain JCSC1435).